Reading from the N-terminus, the 398-residue chain is uncharacterized protein (398 aa).

A signal peptide spans 1 to 21; the sequence is MRKVGITLSVVALVIMGFVAG. Residue cysteine 22 is modified to N-acetylcysteine. The S-archaeol cysteine moiety is linked to residue cysteine 22.

Belongs to the BMP lipoprotein family.

It localises to the cell membrane. This is an uncharacterized protein from Pyrococcus furiosus (strain ATCC 43587 / DSM 3638 / JCM 8422 / Vc1).